The primary structure comprises 274 residues: 5'-nucleotidase SurE (274 aa).

4 residues coordinate a divalent metal cation: aspartate 12, aspartate 13, serine 45, and asparagine 103.

Belongs to the SurE nucleotidase family. It depends on a divalent metal cation as a cofactor.

The protein resides in the cytoplasm. It carries out the reaction a ribonucleoside 5'-phosphate + H2O = a ribonucleoside + phosphate. Functionally, nucleotidase that shows phosphatase activity on nucleoside 5'-monophosphates. This chain is 5'-nucleotidase SurE, found in Chlamydia felis (strain Fe/C-56) (Chlamydophila felis).